An 804-amino-acid chain; its full sequence is Leucine--tRNA ligase (804 aa).

The short motif at 39–50 (PFPSGKGLHVGH) is the 'HIGH' region element. The short motif at 573–577 (KMSKS) is the 'KMSKS' region element. Residue K576 participates in ATP binding.

The protein belongs to the class-I aminoacyl-tRNA synthetase family.

It is found in the cytoplasm. The catalysed reaction is tRNA(Leu) + L-leucine + ATP = L-leucyl-tRNA(Leu) + AMP + diphosphate. In Lactobacillus johnsonii (strain CNCM I-12250 / La1 / NCC 533), this protein is Leucine--tRNA ligase.